A 568-amino-acid polypeptide reads, in one-letter code: PWWP domain-containing protein2 (568 aa).

The segment covering 1-19 has biased composition (basic and acidic residues); the sequence is MTEIKDSSVKDENPGKQEE. Disordered stretches follow at residues 1–126, 213–340, and 465–568; these read MTEI…YKPG, QSTP…DVAK, and IASL…TGQK. Positions 29 to 46 are enriched in polar residues; the sequence is MSTATNNSKNIETTSSNG. Composition is skewed to basic and acidic residues over residues 48–88 and 100–122; these read EDIK…KTIE and KSQK…ERVN. One can recognise a PWWP domain in the interval 125–189; that stretch reads PGMRVLTKMS…SDSLTPLTSE (65 aa). Positions 214-228 are enriched in low complexity; the sequence is STPDLDSLSVPSSES. Residues 229–249 are compositionally biased toward acidic residues; sequence EVSEEESDQEMSEPSPIEEDY. Residues 255–266 show a composition bias toward basic residues; the sequence is RRITRKGTKKKT. Over residues 281–292 the composition is skewed to polar residues; sequence LNASSNVSSNPA. Over residues 325-336 the composition is skewed to acidic residues; that stretch reads KEEEEGSVANEE. Basic and acidic residues-rich tracts occupy residues 489-500 and 514-541; these read KQNEDNEDKVKA and DASK…KDFA.

The polypeptide is PWWP domain-containing protein2 (pdp2) (Schizosaccharomyces pombe (strain 972 / ATCC 24843) (Fission yeast)).